The sequence spans 1194 residues: Immunoglobulin superfamily member 3 (1194 aa).

A signal peptide spans 1–19 (MKCFFPVLSCLAVLGVVSA). Ig-like C2-type domains follow at residues 20–138 (QRQV…AKMN), 143–262 (PDSL…WYAM), 276–386 (PTDK…KTVT), 401–539 (PIIV…ISIT), 545–661 (FAVT…WTRL), 676–803 (PVTK…EEVS), 813–945 (PDSR…TALT), and 949–1097 (PDAS…YRLT). At 20–1124 (QRQVTVQEGP…LQSIICSNDA (1105 aa)) the chain is on the extracellular side. 2 cysteine pairs are disulfide-bonded: cysteine 42-cysteine 120 and cysteine 167-cysteine 246. A glycan (N-linked (GlcNAc...) asparagine) is linked at asparagine 43. An EWI motif motif is present at residues 250 to 252 (EWI). A disulfide bond links cysteine 302 and cysteine 376. N-linked (GlcNAc...) asparagine glycosylation is present at asparagine 418. Cystine bridges form between cysteine 432-cysteine 511 and cysteine 566-cysteine 645. N-linked (GlcNAc...) asparagine glycosylation is present at asparagine 655. Disulfide bonds link cysteine 701–cysteine 782, cysteine 838–cysteine 918, and cysteine 974–cysteine 1080. The N-linked (GlcNAc...) asparagine glycan is linked to asparagine 842. Residues 997 to 1033 (AGGKRSSPGLEEQEEEREEEEEEDDDDDDDPTERTAL) form a disordered region. Acidic residues predominate over residues 1007–1027 (EEQEEEREEEEEEDDDDDDDP). N-linked (GlcNAc...) asparagine glycosylation occurs at asparagine 1077. The chain crosses the membrane as a helical span at residues 1125-1145 (LFYFVFFYPFPIFGILIITIL). Residues 1146-1194 (LVRFKSRNSSKNSDGKNGVPLLWIKEPHLNYSPTCLEPPVLSIHPGAID) lie on the Cytoplasmic side of the membrane.

In terms of tissue distribution, expressed in a wide range of tissues with High expression in Placenta, kidney and lung.

Its subcellular location is the membrane. The protein is Immunoglobulin superfamily member 3 (IGSF3) of Homo sapiens (Human).